A 257-amino-acid polypeptide reads, in one-letter code: Cytosolic Fe-S cluster assembly factor NUBP2 homolog (257 aa).

Position 14 to 21 (G14 to S21) interacts with ATP. C188 and C191 together coordinate [4Fe-4S] cluster.

This sequence belongs to the Mrp/NBP35 ATP-binding proteins family. NUBP2/CFD1 subfamily. Heterotetramer of 2 NUBP1 and 2 NUBP2 chains. [4Fe-4S] cluster serves as cofactor.

Its subcellular location is the cytoplasm. Component of the cytosolic iron-sulfur (Fe/S) protein assembly (CIA) machinery. Required for maturation of extramitochondrial Fe-S proteins. The NUBP1-NUBP2 heterotetramer forms a Fe-S scaffold complex, mediating the de novo assembly of an Fe-S cluster and its transfer to target apoproteins. This is Cytosolic Fe-S cluster assembly factor NUBP2 homolog from Culex quinquefasciatus (Southern house mosquito).